Consider the following 438-residue polypeptide: Coenzyme A disulfide reductase (438 aa).

Residue 8–33 (GAVAGGATCASQIRRLDKESEIIVFE) participates in FAD binding. Substrate is bound by residues Thr-15, Gln-19, Arg-22, Ser-39, and Asn-42. The Nucleophile role is filled by Cys-43. Catalysis depends on Cys-43, which acts as the Redox-active. Substrate is bound at residue Lys-71. Residue 151–166 (ALVVGAGYISLEVLEN) coordinates NADP(+). 267–277 (TNIPNIYALGD) provides a ligand contact to FAD. His-299 serves as a coordination point for substrate. Tyr-419 contributes to the FAD binding site. Lys-427 provides a ligand contact to substrate.

It belongs to the class-III pyridine nucleotide-disulfide oxidoreductase family. As to quaternary structure, homodimer. FAD is required as a cofactor.

The enzyme catalyses NADP(+) + 2 CoA = CoA-disulfide + NADPH + H(+). Functionally, catalyzes specifically the NADPH-dependent reduction of coenzyme A disulfide. This Staphylococcus epidermidis (strain ATCC 35984 / DSM 28319 / BCRC 17069 / CCUG 31568 / BM 3577 / RP62A) protein is Coenzyme A disulfide reductase.